Reading from the N-terminus, the 668-residue chain is tRNA 5-methylaminomethyl-2-thiouridine biosynthesis bifunctional protein MnmC (668 aa).

The segment at 1 to 245 (MKHYSIQPAN…KREMLCGVME (245 aa)) is tRNA (mnm(5)s(2)U34)-methyltransferase. Positions 270-668 (IGGGIACALL…LLKGKAVKAG (399 aa)) are FAD-dependent cmnm(5)s(2)U34 oxidoreductase.

In the N-terminal section; belongs to the methyltransferase superfamily. tRNA (mnm(5)s(2)U34)-methyltransferase family. The protein in the C-terminal section; belongs to the DAO family. Requires FAD as cofactor.

The protein localises to the cytoplasm. It catalyses the reaction 5-aminomethyl-2-thiouridine(34) in tRNA + S-adenosyl-L-methionine = 5-methylaminomethyl-2-thiouridine(34) in tRNA + S-adenosyl-L-homocysteine + H(+). Its function is as follows. Catalyzes the last two steps in the biosynthesis of 5-methylaminomethyl-2-thiouridine (mnm(5)s(2)U) at the wobble position (U34) in tRNA. Catalyzes the FAD-dependent demodification of cmnm(5)s(2)U34 to nm(5)s(2)U34, followed by the transfer of a methyl group from S-adenosyl-L-methionine to nm(5)s(2)U34, to form mnm(5)s(2)U34. In Shigella boydii serotype 4 (strain Sb227), this protein is tRNA 5-methylaminomethyl-2-thiouridine biosynthesis bifunctional protein MnmC.